The following is a 323-amino-acid chain: ATP synthase gamma chain (323 aa).

Positions 215–237 are disordered; the sequence is PAGGPAKEQEQGDEGGHGAPSAA. Positions 221–230 are enriched in basic and acidic residues; the sequence is KEQEQGDEGG.

It belongs to the ATPase gamma chain family. As to quaternary structure, F-type ATPases have 2 components, CF(1) - the catalytic core - and CF(0) - the membrane proton channel. CF(1) has five subunits: alpha(3), beta(3), gamma(1), delta(1), epsilon(1). CF(0) has three main subunits: a, b and c.

The protein localises to the cell inner membrane. In terms of biological role, produces ATP from ADP in the presence of a proton gradient across the membrane. The gamma chain is believed to be important in regulating ATPase activity and the flow of protons through the CF(0) complex. This Sorangium cellulosum (strain So ce56) (Polyangium cellulosum (strain So ce56)) protein is ATP synthase gamma chain.